Reading from the N-terminus, the 854-residue chain is Armadillo repeat-containing protein 2 (854 aa).

Disordered stretches follow at residues 1-116 (MLSS…SFPK), 140-194 (QGML…PLLT), and 206-255 (EVSL…ETDT). Residues 58-73 (PASSRSPENRPPSSFS) show a composition bias toward low complexity. Composition is skewed to polar residues over residues 74-87 (LHAS…SKPI) and 162-187 (KPVS…TGQL). ARM repeat units lie at residues 255-294 (TEVD…RTLE), 298-337 (MLGK…ALKV), 356-396 (EKND…ALKF), 401-442 (PGFL…HLLV), 455-496 (PLTR…KLTS), 499-540 (DCCA…NLTA), 544-583 (QARE…EAKP), 585-605 (AEAE…AIHP), 606-649 (RIGP…NLSF), 651-692 (QVKS…NLSQ), 694-733 (HDVC…NLTV), and 735-777 (KEKR…NFSE).

Its function is as follows. Required for sperm flagellum axoneme organization and function. Involved in axonemal central pair complex assembly and/or stability. The protein is Armadillo repeat-containing protein 2 of Mus musculus (Mouse).